The sequence spans 279 residues: 4-diphosphocytidyl-2-C-methyl-D-erythritol kinase (279 aa).

Residue Lys-10 is part of the active site. 91-101 (PVASGIGGGSA) provides a ligand contact to ATP. Asp-130 is an active-site residue.

The protein belongs to the GHMP kinase family. IspE subfamily.

The enzyme catalyses 4-CDP-2-C-methyl-D-erythritol + ATP = 4-CDP-2-C-methyl-D-erythritol 2-phosphate + ADP + H(+). It functions in the pathway isoprenoid biosynthesis; isopentenyl diphosphate biosynthesis via DXP pathway; isopentenyl diphosphate from 1-deoxy-D-xylulose 5-phosphate: step 3/6. Catalyzes the phosphorylation of the position 2 hydroxy group of 4-diphosphocytidyl-2C-methyl-D-erythritol. In Ruegeria pomeroyi (strain ATCC 700808 / DSM 15171 / DSS-3) (Silicibacter pomeroyi), this protein is 4-diphosphocytidyl-2-C-methyl-D-erythritol kinase.